Reading from the N-terminus, the 183-residue chain is Translocon-associated protein subunit beta (183 aa).

The signal sequence occupies residues Met1–Ala17. At Glu18–Asp149 the chain is on the lumenal side. 2 N-linked (GlcNAc...) asparagine glycosylation sites follow: Asn88 and Asn104. A helical transmembrane segment spans residues Trp150 to Tyr169. Residues Ser170 to Asn183 lie on the Cytoplasmic side of the membrane.

The protein belongs to the TRAP-beta family. As to quaternary structure, heterotetramer of TRAP-alpha, TRAP-beta, TRAP-delta and TRAP-gamma. Interacts with STING1.

The protein localises to the endoplasmic reticulum membrane. Its function is as follows. TRAP proteins are part of a complex whose function is to bind calcium to the ER membrane and thereby regulate the retention of ER resident proteins. The protein is Translocon-associated protein subunit beta (SSR2) of Canis lupus familiaris (Dog).